The chain runs to 100 residues: Urease subunit gamma (100 aa).

The protein belongs to the urease gamma subunit family. In terms of assembly, heterotrimer of UreA (gamma), UreB (beta) and UreC (alpha) subunits. Three heterotrimers associate to form the active enzyme.

Its subcellular location is the cytoplasm. It carries out the reaction urea + 2 H2O + H(+) = hydrogencarbonate + 2 NH4(+). The protein operates within nitrogen metabolism; urea degradation; CO(2) and NH(3) from urea (urease route): step 1/1. This chain is Urease subunit gamma, found in Mycobacterium sp. (strain JLS).